Consider the following 118-residue polypeptide: Putative pterin-4-alpha-carbinolamine dehydratase (118 aa).

This sequence belongs to the pterin-4-alpha-carbinolamine dehydratase family.

It catalyses the reaction (4aS,6R)-4a-hydroxy-L-erythro-5,6,7,8-tetrahydrobiopterin = (6R)-L-erythro-6,7-dihydrobiopterin + H2O. The protein is Putative pterin-4-alpha-carbinolamine dehydratase of Pseudomonas fluorescens (strain SBW25).